Here is a 1078-residue protein sequence, read N- to C-terminus: MTKRTFAPVPTQPNFRQLEADILQKWKDEQVFEQTQTRPAPAGEFVFYEGPPTANGKPALHHVLARSFKDLFPRFKVMQGHHVTRKGGWDTHGLPVEISVEKKLGWLGRNHGASREELEEFNRLCRTSVWETIQDWNELTERMGYWLDLGDPYITYQNSYVESVWNLLRRLHEKGLVAQDYKVVPLSPRISSTLSRAELGEVDSYRMVDDPSVYVRLPIVWDTLPERAHAALSSLSGEQRQGLSLLVWTTTPWTLPSNTLAAVNPDLDYVVADSPSGRVIVAEGAVERLSALHKDAAPLEVLARFKGRDLEWVEYEPPFPEVASQLGVVSELHERRDGKPVLHFVVMADFVSDVDGSGVAHEAPAYGAEDLEVARAYGVPLMFGVDDHGILQVTHEQGKFFKDADKGLIADMKARGLMFWAGTLKHRYPFHDRTGDPILYFAKKGWYIRTSQVAGEMLAQNEKINWVPGNIKHGRFGNWLEGNVDWAISRERYWGTPLPFWQSESGQLRVIGSVAELSELAGRDLSDLDLHRPYIDDITFTLDGEEYRRVPEVLDVWFDSGSMPYAQWGLLLNEQGEAVRGAEQFAKHYPADYICEAIDQTRGWFYSLHAISTMLYDQPAYKNVICLGHIVDEKGLKMSKSKGNVVAPLPLFDQYGADSVRWYMFMASDPGDQKRFSERLVAEAQRSYVNTLWNVYSFFVLYANLDQPDLAAAPAVAERPEMDRWLLARLEETVRDVTAALESYDARSGGRALEGFVDDLSNWYVRRSRSRFWGEGGTVDTAAYATLHEALLVVSQLTAPFTPFLADALYRNLSGEESSVHLTPWPTVRAERLDRKLTADMAAVMKVVELGRAVRGAHNLKTRQPLAGVQVRAASPEALDALKRSQTQIMEELNVKAVTFLEGDTDLVQYSLRPNLPVVGKQYGKQLPVLKKALTEADARAVATAVQAGQGFSVQADGVTFDLTPGSVLVDAKAPEGVAAAEDAGYLVAFDTALTPELVREGLARDLVRAIQEARKAAGFEVQDRIALALELDGEALEAAQAWQDFIAGEVLAEQVAYGSGEGFRAEVEGGAVTLKKL.

Residues 52–62 carry the 'HIGH' region motif; that stretch reads PTANGKPALHH. Positions 637–641 match the 'KMSKS' region motif; sequence KMSKS. An ATP-binding site is contributed by Lys-640.

The protein belongs to the class-I aminoacyl-tRNA synthetase family. IleS type 2 subfamily. Monomer. Requires Zn(2+) as cofactor.

The protein localises to the cytoplasm. The enzyme catalyses tRNA(Ile) + L-isoleucine + ATP = L-isoleucyl-tRNA(Ile) + AMP + diphosphate. In terms of biological role, catalyzes the attachment of isoleucine to tRNA(Ile). As IleRS can inadvertently accommodate and process structurally similar amino acids such as valine, to avoid such errors it has two additional distinct tRNA(Ile)-dependent editing activities. One activity is designated as 'pretransfer' editing and involves the hydrolysis of activated Val-AMP. The other activity is designated 'posttransfer' editing and involves deacylation of mischarged Val-tRNA(Ile). The sequence is that of Isoleucine--tRNA ligase from Deinococcus radiodurans (strain ATCC 13939 / DSM 20539 / JCM 16871 / CCUG 27074 / LMG 4051 / NBRC 15346 / NCIMB 9279 / VKM B-1422 / R1).